The chain runs to 356 residues: tRNA (guanine(26)-N(2))-dimethyltransferase (356 aa).

In terms of domain architecture, Trm1 methyltransferase spans 5–352 (VLRREGTVEF…VSAGEVERVL (348 aa)). Residues Arg40, Arg67, Asp85, Asp111, and Ala112 each coordinate S-adenosyl-L-methionine.

It belongs to the class I-like SAM-binding methyltransferase superfamily. Trm1 family.

It catalyses the reaction guanosine(26) in tRNA + 2 S-adenosyl-L-methionine = N(2)-dimethylguanosine(26) in tRNA + 2 S-adenosyl-L-homocysteine + 2 H(+). Dimethylates a single guanine residue at position 26 of a number of tRNAs using S-adenosyl-L-methionine as donor of the methyl groups. The polypeptide is tRNA (guanine(26)-N(2))-dimethyltransferase (Pyrobaculum arsenaticum (strain DSM 13514 / JCM 11321 / PZ6)).